We begin with the raw amino-acid sequence, 370 residues long: Aldo-keto reductase dtxS3 (370 aa).

Asp-78 lines the NADP(+) pocket. Tyr-83 functions as the Proton donor in the catalytic mechanism. His-174 provides a ligand contact to substrate. NADP(+) contacts are provided by residues 204 to 205 (SS), Gln-230, 259 to 269 (GPLASGRLARR), and 333 to 341 (GSVGRIEEA).

The protein belongs to the aldo/keto reductase family.

It functions in the pathway secondary metabolite biosynthesis. Aldo-keto reductase; part of the gene cluster that mediates the biosynthesis of destruxins, insecticidal cyclic hexadepsipeptides which induce flaccid paralysis and visceral muscle contraction in insects through targeting the calcium channels and vacuolar-type ATPases. The aldo-keto reductase dtxS3 converts alpha-ketoisocaproic acid from deaminated leucine into alpha-hydroxyisocaproic acid (HIC), which is the first substrate for destruxin assembly by dtxS1. L-aspartate decarboxylase dtxS4 converts aspartic acid into beta-alanine, the last substrate for the destruxin assembly line performed by dtxS1. The nonribosomal peptide synthetase dtxS1 synthesizes destruxins B and B2, whereas the cytochrome P450 monooxygenase dtxS2 is required to convert destruxin B into other destruxin derivatives, including destructins C, D, A and E. Destruxin E-diol (ED) is further produced in a non-enzymatic manner from destruxin E. Destruxins play an important role in virulence and escape from insect host immune defenses. This chain is Aldo-keto reductase dtxS3, found in Metarhizium robertsii (strain ARSEF 23 / ATCC MYA-3075) (Metarhizium anisopliae (strain ARSEF 23)).